The sequence spans 99 residues: Signal recognition particle 19 kDa protein (99 aa).

Belongs to the SRP19 family. In terms of assembly, part of the signal recognition particle protein translocation system, which is composed of SRP and FtsY. Archaeal SRP consists of a 7S RNA molecule of 300 nucleotides and two protein subunits: SRP54 and SRP19.

Its subcellular location is the cytoplasm. Involved in targeting and insertion of nascent membrane proteins into the cytoplasmic membrane. Binds directly to 7S RNA and mediates binding of the 54 kDa subunit of the SRP. This is Signal recognition particle 19 kDa protein from Ignicoccus hospitalis (strain KIN4/I / DSM 18386 / JCM 14125).